Consider the following 176-residue polypeptide: dCTP deaminase (176 aa).

Residues 99-104 (RSTLAR) and Asp-115 each bind dCTP. Residue Glu-125 is the Proton donor/acceptor of the active site. Gln-163 contacts dCTP.

It belongs to the dCTP deaminase family. In terms of assembly, homotrimer.

The catalysed reaction is dCTP + H2O + H(+) = dUTP + NH4(+). Its pathway is pyrimidine metabolism; dUMP biosynthesis; dUMP from dCTP (dUTP route): step 1/2. Its function is as follows. Catalyzes the deamination of dCTP to dUTP. The chain is dCTP deaminase from Pyrobaculum neutrophilum (strain DSM 2338 / JCM 9278 / NBRC 100436 / V24Sta) (Thermoproteus neutrophilus).